Here is a 902-residue protein sequence, read N- to C-terminus: Cytosolic 10-formyltetrahydrofolate dehydrogenase (902 aa).

The interval Met-1 to Ala-310 is hydrolase domain. Ser-9 carries the phosphoserine modification. Lys-38 carries the post-translational modification N6-succinyllysine. Gln-88–Ile-90 lines the (6R)-10-formyltetrahydrofolate pocket. His-106 (proton donor) is an active-site residue. (6R)-10-formyltetrahydrofolate is bound at residue Asp-142. In terms of domain architecture, Carrier spans Glu-318–Leu-395. An O-(pantetheine 4'-phosphoryl)serine modification is found at Ser-354. The tract at residues Thr-417–Tyr-902 is aldehyde dehydrogenase domain. NADP(+) contacts are provided by residues Ile-571–Trp-573 and Lys-597–Gln-600. 2 positions are modified to phosphoserine: Ser-629 and Ser-631. NADP(+) contacts are provided by residues Gly-630–Gln-635 and Gly-650–Ser-651. Lys-660 bears the N6-succinyllysine mark. Glu-673 serves as the catalytic Proton acceptor. Glu-673–Leu-674 contacts NADP(+). Cys-707 acts as the Proton donor in catalysis. NADP(+) is bound at residue Lys-757. Lys-767 is subject to N6-succinyllysine. Glu-804 to Phe-806 is an NADP(+) binding site. Residue Ser-825 is modified to Phosphoserine. N6-acetyllysine is present on Lys-882.

This sequence in the N-terminal section; belongs to the GART family. In the C-terminal section; belongs to the aldehyde dehydrogenase family. ALDH1L subfamily. In terms of assembly, homotetramer. In terms of processing, phosphopantetheinylation at Ser-354 by AASDHPPT is required for the formyltetrahydrofolate dehydrogenase activity.

It localises to the cytoplasm. Its subcellular location is the cytosol. It carries out the reaction (6R)-10-formyltetrahydrofolate + NADP(+) + H2O = (6S)-5,6,7,8-tetrahydrofolate + CO2 + NADPH + H(+). Its function is as follows. Cytosolic 10-formyltetrahydrofolate dehydrogenase that catalyzes the NADP(+)-dependent conversion of 10-formyltetrahydrofolate to tetrahydrofolate and carbon dioxide. May also have an NADP(+)-dependent aldehyde dehydrogenase activity towards formaldehyde, acetaldehyde, propionaldehyde, and benzaldehyde. This Pongo abelii (Sumatran orangutan) protein is Cytosolic 10-formyltetrahydrofolate dehydrogenase.